A 266-amino-acid polypeptide reads, in one-letter code: Proteasome subunit alpha type-1 (266 aa).

Residues 235-266 form a disordered region; sequence DGFKTRPEDIPAVADNEEDDDELHEQPPDVEE. The segment covering 249–266 has biased composition (acidic residues); that stretch reads DNEEDDDELHEQPPDVEE.

The protein belongs to the peptidase T1A family. As to quaternary structure, the 26S proteasome consists of a 20S proteasome core and two 19S regulatory subunits. The 20S proteasome core is composed of 28 subunits that are arranged in four stacked rings, resulting in a barrel-shaped structure. The two end rings are each formed by seven alpha subunits, and the two central rings are each formed by seven beta subunits. The catalytic chamber with the active sites is on the inside of the barrel.

Its subcellular location is the cytoplasm. It localises to the nucleus. The proteasome is a multicatalytic proteinase complex which is characterized by its ability to cleave peptides with Arg, Phe, Tyr, Leu, and Glu adjacent to the leaving group at neutral or slightly basic pH. The proteasome has an ATP-dependent proteolytic activity. The polypeptide is Proteasome subunit alpha type-1 (Trypanosoma brucei rhodesiense).